Here is a 500-residue protein sequence, read N- to C-terminus: Cytochrome P450 71B35 (500 aa).

Residues 1–21 (MAHIWLLPLIFLVCILLAVFN) form a helical membrane-spanning segment. Cys439 is a binding site for heme.

This sequence belongs to the cytochrome P450 family. Requires heme as cofactor.

The protein localises to the membrane. In Arabidopsis thaliana (Mouse-ear cress), this protein is Cytochrome P450 71B35 (CYP71B35).